The following is a 131-amino-acid chain: Leptin receptor overlapping transcript-like 1 (131 aa).

The next 4 membrane-spanning stretches (helical) occupy residues 7 to 27, 32 to 52, 69 to 89, and 100 to 120; these read LISLSFGGAIGLMFLMLGCAL, KYWPLFVLFFYILSPIPYCIA, LAIFLTTGIVVSAFGLPIVFA, and ALVLTGNTVIFATILGFFLVF.

Belongs to the OB-RGRP/VPS55 family. Interacts with RAB13. Widely expressed, with highest expression in heart, testis, adrenal gland, thymus, and spleen, and lowest expression in lung and skeletal muscle.

Its subcellular location is the membrane. In terms of biological role, negatively regulates growth hormone (GH) receptor cell surface expression in liver. May play a role in liver resistance to GH during periods of reduced nutrient availability. The sequence is that of Leptin receptor overlapping transcript-like 1 (LEPROTL1) from Homo sapiens (Human).